We begin with the raw amino-acid sequence, 365 residues long: S-adenosylmethionine:tRNA ribosyltransferase-isomerase (365 aa).

The protein belongs to the QueA family. In terms of assembly, monomer.

Its subcellular location is the cytoplasm. The catalysed reaction is 7-aminomethyl-7-carbaguanosine(34) in tRNA + S-adenosyl-L-methionine = epoxyqueuosine(34) in tRNA + adenine + L-methionine + 2 H(+). Its pathway is tRNA modification; tRNA-queuosine biosynthesis. Its function is as follows. Transfers and isomerizes the ribose moiety from AdoMet to the 7-aminomethyl group of 7-deazaguanine (preQ1-tRNA) to give epoxyqueuosine (oQ-tRNA). The protein is S-adenosylmethionine:tRNA ribosyltransferase-isomerase of Helicobacter hepaticus (strain ATCC 51449 / 3B1).